Reading from the N-terminus, the 959-residue chain is DNA-directed RNA polymerase subunit beta'' (959 aa).

Residues Cys211, Cys288, Cys295, and Cys298 each contribute to the Zn(2+) site.

Belongs to the RNA polymerase beta' chain family. RpoC2 subfamily. In terms of assembly, in plastids the minimal PEP RNA polymerase catalytic core is composed of four subunits: alpha, beta, beta', and beta''. When a (nuclear-encoded) sigma factor is associated with the core the holoenzyme is formed, which can initiate transcription. Zn(2+) is required as a cofactor.

It is found in the plastid. It localises to the apicoplast. It carries out the reaction RNA(n) + a ribonucleoside 5'-triphosphate = RNA(n+1) + diphosphate. DNA-dependent RNA polymerase catalyzes the transcription of DNA into RNA using the four ribonucleoside triphosphates as substrates. In Plasmodium falciparum (isolate 3D7), this protein is DNA-directed RNA polymerase subunit beta''.